The chain runs to 486 residues: Cardiolipin synthase A (486 aa).

The next 2 helical transmembrane spans lie at 3–23 and 38–58; these read TFYT…IAGV and MAWL…YLSF. PLD phosphodiesterase domains follow at residues 219-246 and 399-426; these read MDLR…VDPR and EGGL…DMRS. Catalysis depends on residues His224, Lys226, Asp231, His404, Lys406, and Asp411.

It belongs to the phospholipase D family. Cardiolipin synthase subfamily. ClsA sub-subfamily.

It localises to the cell inner membrane. The catalysed reaction is 2 a 1,2-diacyl-sn-glycero-3-phospho-(1'-sn-glycerol) = a cardiolipin + glycerol. In terms of biological role, catalyzes the reversible phosphatidyl group transfer from one phosphatidylglycerol molecule to another to form cardiolipin (CL) (diphosphatidylglycerol) and glycerol. In Yersinia pseudotuberculosis serotype O:1b (strain IP 31758), this protein is Cardiolipin synthase A.